Reading from the N-terminus, the 129-residue chain is Large ribosomal subunit protein bL32m (129 aa).

The transit peptide at 1 to 63 directs the protein to the mitochondrion; sequence MAAMTAAAAA…LEDIWEGILR (63 aa). Zn(2+)-binding residues include C94, C97, C107, and C110.

The protein belongs to the bacterial ribosomal protein bL32 family. In terms of assembly, component of the mitochondrial large ribosomal subunit (mt-LSU). Mature N.crassa 74S mitochondrial ribosomes consist of a small (37S) and a large (54S) subunit. The 37S small subunit contains a 16S ribosomal RNA (16S mt-rRNA) and 32 different proteins. The 54S large subunit contains a 23S rRNA (23S mt-rRNA) and 42 different proteins. bL32m has a zinc binding site. MRPL32 precursor is processed by the m-AAA protease (composed of YTA12/RCA1 and YTA10/AFG3), which cleaves the N-terminal transit peptide. Cleavage by the m-AAA protease takes place prior to assembly into the large subunit, an essential step for mitochondrial ribosome (mitoribosome) assembly. Proper processing by the m-AAA protease is dependent on the zinc-binding region within the tightly folded C-terminal domain of MRPL32: zinc-dependent folding halts degradation initiated from the N-terminus and triggers the release of mature MRPL32.

It is found in the mitochondrion. Functionally, component of the mitochondrial ribosome (mitoribosome), a dedicated translation machinery responsible for the synthesis of mitochondrial genome-encoded proteins, including at least some of the essential transmembrane subunits of the mitochondrial respiratory chain. The mitoribosomes are attached to the mitochondrial inner membrane and translation products are cotranslationally integrated into the membrane. The chain is Large ribosomal subunit protein bL32m (mrpl32) from Neurospora crassa (strain ATCC 24698 / 74-OR23-1A / CBS 708.71 / DSM 1257 / FGSC 987).